A 478-amino-acid chain; its full sequence is Cytochrome c biogenesis protein CcsB (478 aa).

3 helical membrane-spanning segments follow: residues 30 to 50 (LRLAIGLFLAIALLSAVGTVI), 89 to 109 (TSWFLALLILFGSSLAACSLT), and 175 to 195 (FGPILVHVSLLLILLGAIWGS). The disordered stretch occupies residues 453–478 (LSSPPSPAKEPPPAARVGGTESLANG). Over residues 456-466 (PPSPAKEPPPA) the composition is skewed to pro residues.

Belongs to the Ccs1/CcsB family. In terms of assembly, may interact with CcsA.

It localises to the cellular thylakoid membrane. Its function is as follows. Required during biogenesis of c-type cytochromes (cytochrome c6 and cytochrome f) at the step of heme attachment. In Synechococcus sp. (strain JA-3-3Ab) (Cyanobacteria bacterium Yellowstone A-Prime), this protein is Cytochrome c biogenesis protein CcsB.